The following is a 237-amino-acid chain: Uridylate kinase (237 aa).

Lys13–Gly16 contacts ATP. Gly53 contributes to the UMP binding site. Residues Gly54 and Arg58 each contribute to the ATP site. UMP contacts are provided by residues Asp73 and Ala134 to Thr141. Residues Asn162, Tyr168, and Asp171 each coordinate ATP.

It belongs to the UMP kinase family. In terms of assembly, homohexamer.

Its subcellular location is the cytoplasm. It catalyses the reaction UMP + ATP = UDP + ADP. Its pathway is pyrimidine metabolism; CTP biosynthesis via de novo pathway; UDP from UMP (UMPK route): step 1/1. Its activity is regulated as follows. Inhibited by UTP. Functionally, catalyzes the reversible phosphorylation of UMP to UDP. The sequence is that of Uridylate kinase from Leifsonia xyli subsp. xyli (strain CTCB07).